Consider the following 257-residue polypeptide: Uracil phosphoribosyltransferase (257 aa).

5-phospho-alpha-D-ribose 1-diphosphate-binding positions include Arg77, Arg102, and 129–137 (DPMLATGGS). Uracil is bound by residues Ile192 and 197 to 199 (GDA). Asp198 lines the 5-phospho-alpha-D-ribose 1-diphosphate pocket. The tract at residues 203–257 (QFGPNLFTSSAPSRPEAPAGRGRAAAKTPGRRSARSESPSSTSPSARSRKAAPPA) is disordered. 2 stretches are compositionally biased toward low complexity: residues 211–230 (SSAP…AAKT) and 238–248 (SESPSSTSPSA).

This sequence belongs to the UPRTase family. Requires Mg(2+) as cofactor.

The enzyme catalyses UMP + diphosphate = 5-phospho-alpha-D-ribose 1-diphosphate + uracil. Its pathway is pyrimidine metabolism; UMP biosynthesis via salvage pathway; UMP from uracil: step 1/1. Its activity is regulated as follows. Allosterically activated by GTP. Functionally, catalyzes the conversion of uracil and 5-phospho-alpha-D-ribose 1-diphosphate (PRPP) to UMP and diphosphate. This chain is Uracil phosphoribosyltransferase, found in Mycolicibacterium paratuberculosis (strain ATCC BAA-968 / K-10) (Mycobacterium paratuberculosis).